The primary structure comprises 304 residues: Uricase (304 aa).

Position 2 is an N-acetylalanine (alanine 2). Residues lysine 10 and lysine 23 each carry the N6-acetyllysine; alternate modification. 2 positions are modified to N6-succinyllysine; alternate: lysine 10 and lysine 23. Lysine 23 serves as the catalytic Charge relay system. Residues lysine 27 and lysine 36 each carry the N6-acetyllysine modification. Phosphoserine is present on residues serine 39 and serine 63. Residue threonine 68 is the Charge relay system of the active site. Residues threonine 68 and aspartate 69 each contribute to the urate site. An N6-acetyllysine mark is found at lysine 118, lysine 122, and lysine 164. Phenylalanine 170 provides a ligand contact to urate. 2 positions are modified to N6-acetyllysine: lysine 175 and lysine 185. Residue arginine 187 participates in urate binding. An N6-acetyllysine; alternate mark is found at lysine 221 and lysine 228. An N6-succinyllysine; alternate mark is found at lysine 221 and lysine 228. At serine 232 the chain carries Phosphoserine. Positions 235, 236, and 262 each coordinate urate. The active-site Charge relay system is histidine 264. Residue lysine 278 is modified to N6-acetyllysine. The residue at position 289 (tyrosine 289) is a Phosphotyrosine. Positions 302-304 (SRL) match the Microbody targeting signal motif.

It belongs to the uricase family. As to quaternary structure, homotetramer.

The protein resides in the peroxisome. The catalysed reaction is urate + O2 + H2O = 5-hydroxyisourate + H2O2. The protein operates within purine metabolism; urate degradation; (S)-allantoin from urate: step 1/3. Catalyzes the oxidation of uric acid to 5-hydroxyisourate, which is further processed to form (S)-allantoin. This is Uricase (UOX) from Sus scrofa (Pig).